Reading from the N-terminus, the 169-residue chain is Nicotinamide-nucleotide adenylyltransferase (169 aa).

It belongs to the archaeal NMN adenylyltransferase family.

It is found in the cytoplasm. The catalysed reaction is beta-nicotinamide D-ribonucleotide + ATP + H(+) = diphosphate + NAD(+). It functions in the pathway cofactor biosynthesis; NAD(+) biosynthesis; NAD(+) from nicotinamide D-ribonucleotide: step 1/1. This is Nicotinamide-nucleotide adenylyltransferase from Picrophilus torridus (strain ATCC 700027 / DSM 9790 / JCM 10055 / NBRC 100828 / KAW 2/3).